The sequence spans 205 residues: MSSDHRDQYYWRAKRDQFRSRAAYKLEFLIERYGIIKDGQAVLEIGSSPGGWTQVLVDHGCRVVAVDIQPMDEIPGVIFLKLNILREDAAERIREEMARSLVQRFDVVLSDAMAKTSGIRSSDHAASVMIGNAVMKIAMDTLRRGGVAVVKQFQGDMTGDFIKNWGHYFRDHRITKPPASRKESSEVYIIFYGFSGKETDNSVQG.

S-adenosyl-L-methionine is bound by residues Gly50, Trp52, Asp67, Asn83, and Asp111. Residue Lys151 is the Proton acceptor of the active site.

This sequence belongs to the class I-like SAM-binding methyltransferase superfamily. RNA methyltransferase RlmE family.

The protein resides in the cytoplasm. The catalysed reaction is uridine(2552) in 23S rRNA + S-adenosyl-L-methionine = 2'-O-methyluridine(2552) in 23S rRNA + S-adenosyl-L-homocysteine + H(+). Its function is as follows. Specifically methylates the uridine in position 2552 of 23S rRNA at the 2'-O position of the ribose in the fully assembled 50S ribosomal subunit. In Thermoplasma acidophilum (strain ATCC 25905 / DSM 1728 / JCM 9062 / NBRC 15155 / AMRC-C165), this protein is Ribosomal RNA large subunit methyltransferase E.